The primary structure comprises 633 residues: Threonine--tRNA ligase (633 aa).

The TGS domain maps to 1–61; that stretch reads MINISFPDGS…DNDCRLRILT (61 aa). Residues 242-533 are catalytic; sequence DHRKLGKELD…LIEEYAGRFP (292 aa). Residues Cys-333, His-384, and His-510 each contribute to the Zn(2+) site.

The protein belongs to the class-II aminoacyl-tRNA synthetase family. As to quaternary structure, homodimer. Requires Zn(2+) as cofactor.

The protein localises to the cytoplasm. It carries out the reaction tRNA(Thr) + L-threonine + ATP = L-threonyl-tRNA(Thr) + AMP + diphosphate + H(+). Catalyzes the attachment of threonine to tRNA(Thr) in a two-step reaction: L-threonine is first activated by ATP to form Thr-AMP and then transferred to the acceptor end of tRNA(Thr). Also edits incorrectly charged L-seryl-tRNA(Thr). The sequence is that of Threonine--tRNA ligase from Rickettsia bellii (strain OSU 85-389).